Reading from the N-terminus, the 144-residue chain is Ribonuclease VapC1 (144 aa).

The region spanning 6–132 is the PINc domain; that stretch reads VFVDGNVIVD…SFYSPDIEVL (127 aa). Mg(2+) contacts are provided by Asp-9 and Asp-102.

It belongs to the PINc/VapC protein family. Mg(2+) is required as a cofactor.

In terms of biological role, toxic component of a type II toxin-antitoxin (TA) system. An RNase. This Aquifex aeolicus (strain VF5) protein is Ribonuclease VapC1.